A 73-amino-acid chain; its full sequence is Kappa-scoloptoxin SsmTx-I (73 aa).

The first 25 residues, 1-25 (MMMMFSVVSVFLMLLLLKFHDLSMG), serve as a signal peptide directing secretion. The propeptide occupies 26–37 (EEISLLKKVVRR). Disulfide bonds link Cys-45/Cys-56 and Cys-50/Cys-63.

Belongs to the scoloptoxin-04 family. In terms of tissue distribution, expressed by the venom gland.

The protein resides in the secreted. In terms of biological role, exhibits highly specific blockage of Kv2.1/KCNB1 (IC(50)=41.7 nM) voltage-gated potassium channels. This blockage is not associated with a significant change in steady-state activation, suggesting that this toxin acts as a channel blocker rather than a gating-modifier. Shows potential analgesic activities in formalin-induced paw licking, thermal pain, and acetic acid-induced abdominal writhing mice models. The polypeptide is Kappa-scoloptoxin SsmTx-I (Scolopendra mutilans (Chinese red-headed centipede)).